The sequence spans 461 residues: Arginine biosynthesis bifunctional protein ArgJ, chloroplastic (461 aa).

6 residues coordinate substrate: Thr-202, Lys-228, Thr-239, Glu-326, Asn-456, and Thr-461. Catalysis depends on Thr-239, which acts as the Nucleophile.

It belongs to the ArgJ family. In terms of assembly, heterodimer of an alpha and a beta chain.

It localises to the plastid. It is found in the chloroplast. It catalyses the reaction N(2)-acetyl-L-ornithine + L-glutamate = N-acetyl-L-glutamate + L-ornithine. The catalysed reaction is L-glutamate + acetyl-CoA = N-acetyl-L-glutamate + CoA + H(+). Its pathway is amino-acid biosynthesis; L-arginine biosynthesis; L-ornithine and N-acetyl-L-glutamate from L-glutamate and N(2)-acetyl-L-ornithine (cyclic): step 1/1. The protein operates within amino-acid biosynthesis; L-arginine biosynthesis; N(2)-acetyl-L-ornithine from L-glutamate: step 1/4. Catalyzes two activities which are involved in the cyclic version of arginine biosynthesis: the synthesis of acetylglutamate from glutamate and acetyl-CoA, and of ornithine by transacetylation between acetylornithine and glutamate. This chain is Arginine biosynthesis bifunctional protein ArgJ, chloroplastic, found in Ostreococcus lucimarinus (strain CCE9901).